The following is a 101-amino-acid chain: CYC02 protein (101 aa).

One copy of the 1; approximate repeat lies at 42-64 (DAVCHHGCCRWFHHRCVRCCRSA). The 2 X approximate repeats stretch occupies residues 42-101 (DAVCHHGCCRWFHHRCVRCCRSAEEVSVSDTENNAAADAHCRHGCCRWFHGRCIRCCPSA). A 2; approximate repeat occupies 79–101 (DAHCRHGCCRWFHGRCIRCCPSA).

It belongs to the GRP family.

May be involved in the control of the cell cycle at the G1/S start transition. The protein is CYC02 protein (CYC02) of Catharanthus roseus (Madagascar periwinkle).